A 361-amino-acid chain; its full sequence is Histidinol-phosphate aminotransferase (361 aa).

Lys-219 is modified (N6-(pyridoxal phosphate)lysine).

The protein belongs to the class-II pyridoxal-phosphate-dependent aminotransferase family. Histidinol-phosphate aminotransferase subfamily. Homodimer. Pyridoxal 5'-phosphate serves as cofactor.

It catalyses the reaction L-histidinol phosphate + 2-oxoglutarate = 3-(imidazol-4-yl)-2-oxopropyl phosphate + L-glutamate. It participates in amino-acid biosynthesis; L-histidine biosynthesis; L-histidine from 5-phospho-alpha-D-ribose 1-diphosphate: step 7/9. In Cereibacter sphaeroides (strain ATCC 17029 / ATH 2.4.9) (Rhodobacter sphaeroides), this protein is Histidinol-phosphate aminotransferase.